Reading from the N-terminus, the 495-residue chain is Bile acid-sensitive ion channel (495 aa).

The binds the plasma membrane and stabilizes the channel in the closed state stretch occupies residues 1 to 30 (MEHTEKSKGPAEKGLLGKIRRYLSKRPLPS). Over 1-61 (MEHTEKSKGP…NIAQNQNKVR (61 aa)) the chain is Cytoplasmic. Residues 62–82 (KVIWLSVVLGSVSLLVWQIYS) form a helical membrane-spanning segment. Over 83–459 (RLVNYFMWPT…GLFCGASLIT (377 aa)) the chain is Extracellular. Disulfide bonds link Cys112/Cys207, Cys185/Cys192, Cys298/Cys377, Cys315/Cys373, Cys328/Cys350, and Cys330/Cys342. N-linked (GlcNAc...) asparagine glycans are attached at residues Asn147 and Asn163. Asn306 carries an N-linked (GlcNAc...) asparagine glycan. Residues Asn370, Asn405, and Asn421 are each glycosylated (N-linked (GlcNAc...) asparagine). The GAS motif; ion selectivity filter signature appears at 454–456 (GAS). A helical transmembrane segment spans residues 460-480 (IIEIIEYLFTSFYWVFIFFLL). Topologically, residues 481 to 495 (KILEMIQRTSPPQTV) are cytoplasmic.

This sequence belongs to the amiloride-sensitive sodium channel (TC 1.A.6) family. ASIC5 subfamily. In terms of assembly, forms homotrimeric channels. Expressed by cholangiocytes (at protein level). Detected in brain, liver, duodenum, jejunum, ileum and testis.

Its subcellular location is the apical cell membrane. It is found in the cell membrane. The catalysed reaction is Na(+)(in) = Na(+)(out). The enzyme catalyses Li(+)(in) = Li(+)(out). It carries out the reaction K(+)(in) = K(+)(out). It catalyses the reaction H(+)(in) = H(+)(out). Inhibited by the diuretic drug amiloride. Inhibited by diminazene. Inhibited by extracellular Ca(2+). Forms bile acid-gated sodium channels and may play a role in bile acid-dependent absorption and secretion by epithelial cells of the bile ducts. Displays high selectivity for sodium ions but can also permit the permeation of other cations. The gating could be indirect and the consequence of alterations of the membrane environment of the channel by bile acids. As a sodium channel of type II unipolar brush cells of the vestibulocerebellum, controlling the electrical activity of these cells, could play a role in motor coordination and balance. This chain is Bile acid-sensitive ion channel, found in Rattus norvegicus (Rat).